A 932-amino-acid polypeptide reads, in one-letter code: DNA mismatch repair protein MutS (932 aa).

615 to 622 (GPNMAGKS) is an ATP binding site.

It belongs to the DNA mismatch repair MutS family.

Its function is as follows. This protein is involved in the repair of mismatches in DNA. It is possible that it carries out the mismatch recognition step. This protein has a weak ATPase activity. In Clostridium botulinum (strain 657 / Type Ba4), this protein is DNA mismatch repair protein MutS.